We begin with the raw amino-acid sequence, 171 residues long: Disulfide bond formation protein B (171 aa).

Residues 1–13 (MSALTRFAQSRLA) lie on the Cytoplasmic side of the membrane. The chain crosses the membrane as a helical span at residues 14–30 (WTLLLLTAVGLEACALF). At 31–48 (FQHVMKLDPCVMCIYQRL) the chain is on the periplasmic side. Cysteines 40 and 43 form a disulfide. A helical membrane pass occupies residues 49-64 (AVLGVLTAGLIGVVGH). The Cytoplasmic portion of the chain corresponds to 65–71 (QFRLLRF). Residues 72-89 (LGVLLWGVSAAWGLKLAL) traverse the membrane as a helical segment. At 90–144 (ELVEMQTNPSPFSTCSFLPEFPEWMPLHEWFPSVFLPTGMCTDIPWEMFGITMSQ) the chain is on the periplasmic side. Cys-104 and Cys-130 are joined by a disulfide. A helical transmembrane segment spans residues 145–163 (WMVVAFSTYLIALVVFIVP). Residues 164–171 (ALMPTKKA) are Cytoplasmic-facing.

This sequence belongs to the DsbB family.

Its subcellular location is the cell inner membrane. Required for disulfide bond formation in some periplasmic proteins. Acts by oxidizing the DsbA protein. The sequence is that of Disulfide bond formation protein B from Shewanella loihica (strain ATCC BAA-1088 / PV-4).